Here is a 656-residue protein sequence, read N- to C-terminus: NADH-ubiquinone oxidoreductase chain 5 (656 aa).

A run of 17 helical transmembrane segments spans residues 4–21 (TLII…FFGR), 28–50 (AHLI…FFEV), 81–103 (LTVS…SISY), 112–129 (RFFS…ILVT), 133–155 (YLIM…NFWF), 176–198 (TLLT…STVF), 208–230 (IITI…VGLH), 243–262 (VSAL…LLMR), 272–294 (TVLV…IGLF), 301–319 (VIAY…AVGL), 329–351 (LVNH…HAVA), 364–386 (EFLP…VPFM), 409–431 (IVYF…VLYL), 452–471 (LFMT…FGYL), 514–536 (FVFT…KLLI), 603–625 (SLGN…GLIF), and 629–651 (LLYF…FALL).

The protein belongs to the complex I subunit 5 family.

The protein localises to the mitochondrion inner membrane. The enzyme catalyses a ubiquinone + NADH + 5 H(+)(in) = a ubiquinol + NAD(+) + 4 H(+)(out). Its function is as follows. Core subunit of the mitochondrial membrane respiratory chain NADH dehydrogenase (Complex I) that is believed to belong to the minimal assembly required for catalysis. Complex I functions in the transfer of electrons from NADH to the respiratory chain. The immediate electron acceptor for the enzyme is believed to be ubiquinone. The chain is NADH-ubiquinone oxidoreductase chain 5 (nad5) from Aspergillus niger.